We begin with the raw amino-acid sequence, 58 residues long: uncharacterized protein (58 aa).

This is an uncharacterized protein from Sinorhizobium fredii (strain NBRC 101917 / NGR234).